The chain runs to 115 residues: Large ribosomal subunit protein bL20 (115 aa).

The protein belongs to the bacterial ribosomal protein bL20 family.

In terms of biological role, binds directly to 23S ribosomal RNA and is necessary for the in vitro assembly process of the 50S ribosomal subunit. It is not involved in the protein synthesizing functions of that subunit. The protein is Large ribosomal subunit protein bL20 of Chlorobaculum parvum (strain DSM 263 / NCIMB 8327) (Chlorobium vibrioforme subsp. thiosulfatophilum).